The sequence spans 328 residues: Extracellular exo-alpha-(1-&gt;5)-L-arabinofuranosidase (328 aa).

Residues 1-43 (MCTREAVRMSREHDLPEIPSRRLLLKGAAAAGALTAVPGVAHA) constitute a signal peptide (tat-tyPE signal). Residue aspartate 60 is the Proton acceptor of the active site. Glutamate 236 serves as the catalytic Proton donor.

The protein belongs to the glycosyl hydrolase 43 family. Predicted to be exported by the Tat system. The position of the signal peptide cleavage has been experimentally proven.

It is found in the secreted. The catalysed reaction is Hydrolysis of terminal non-reducing alpha-L-arabinofuranoside residues in alpha-L-arabinosides.. The protein operates within glycan metabolism; L-arabinan degradation. Involved in the degradation of arabinan and is a key enzyme in the complete degradation of the plant cell wall. Catalyzes only the cleavage of terminal alpha-(1-&gt;5) arabinofuranosyl bonds of arabinan present in the arabinofuranosyl polysaccharides or oligosaccharides. It cannot act on other arabinose-containing polysaccharides and arabinoxylo-oligosaccharides. The protein is Extracellular exo-alpha-(1-&gt;5)-L-arabinofuranosidase of Streptomyces chartreusis.